We begin with the raw amino-acid sequence, 173 residues long: uncharacterized protein (173 aa).

The protein belongs to the ycf73 family.

The protein localises to the plastid. It localises to the chloroplast. This is an uncharacterized protein from Saccharum hybrid (Sugarcane).